A 173-amino-acid polypeptide reads, in one-letter code: Crossover junction endodeoxyribonuclease RuvC (173 aa).

Catalysis depends on residues Asp8, Glu67, and Asp139. Residues Asp8, Glu67, and Asp139 each coordinate Mg(2+).

Belongs to the RuvC family. As to quaternary structure, homodimer which binds Holliday junction (HJ) DNA. The HJ becomes 2-fold symmetrical on binding to RuvC with unstacked arms; it has a different conformation from HJ DNA in complex with RuvA. In the full resolvosome a probable DNA-RuvA(4)-RuvB(12)-RuvC(2) complex forms which resolves the HJ. Mg(2+) serves as cofactor.

The protein resides in the cytoplasm. It catalyses the reaction Endonucleolytic cleavage at a junction such as a reciprocal single-stranded crossover between two homologous DNA duplexes (Holliday junction).. The RuvA-RuvB-RuvC complex processes Holliday junction (HJ) DNA during genetic recombination and DNA repair. Endonuclease that resolves HJ intermediates. Cleaves cruciform DNA by making single-stranded nicks across the HJ at symmetrical positions within the homologous arms, yielding a 5'-phosphate and a 3'-hydroxyl group; requires a central core of homology in the junction. The consensus cleavage sequence is 5'-(A/T)TT(C/G)-3'. Cleavage occurs on the 3'-side of the TT dinucleotide at the point of strand exchange. HJ branch migration catalyzed by RuvA-RuvB allows RuvC to scan DNA until it finds its consensus sequence, where it cleaves and resolves the cruciform DNA. This is Crossover junction endodeoxyribonuclease RuvC from Aliivibrio salmonicida (strain LFI1238) (Vibrio salmonicida (strain LFI1238)).